The sequence spans 800 residues: Cation/H(+) antiporter 9 (800 aa).

12 helical membrane-spanning segments follow: residues Val-43 to Ile-63, Ile-73 to Leu-93, Asn-110 to Val-130, Ile-145 to Phe-165, Val-186 to Leu-206, Ile-216 to Ser-236, Gly-247 to Phe-267, Val-287 to Phe-306, Leu-338 to Val-358, Ile-371 to Ile-391, Val-401 to Ala-421, and Ala-430 to Ile-450.

This sequence belongs to the monovalent cation:proton antiporter 2 (CPA2) transporter (TC 2.A.37) family. CHX (TC 2.A.37.4) subfamily.

Its subcellular location is the membrane. Functionally, may operate as a cation/H(+) antiporter. In Arabidopsis thaliana (Mouse-ear cress), this protein is Cation/H(+) antiporter 9 (CHX9).